Here is a 212-residue protein sequence, read N- to C-terminus: Large ribosomal subunit protein uL3 (212 aa).

Residues 130-158 (KRGSMTHGSKNHRLPGSTGAGTTPGRVYP) are disordered.

This sequence belongs to the universal ribosomal protein uL3 family. As to quaternary structure, part of the 50S ribosomal subunit. Forms a cluster with proteins L14 and L19.

Its function is as follows. One of the primary rRNA binding proteins, it binds directly near the 3'-end of the 23S rRNA, where it nucleates assembly of the 50S subunit. The protein is Large ribosomal subunit protein uL3 of Gloeothece citriformis (strain PCC 7424) (Cyanothece sp. (strain PCC 7424)).